The primary structure comprises 321 residues: Ribosomal RNA small subunit methyltransferase H (321 aa).

S-adenosyl-L-methionine contacts are provided by residues 33-35 (AGH), Asp58, Phe85, Asp111, and Gln118.

Belongs to the methyltransferase superfamily. RsmH family.

Its subcellular location is the cytoplasm. The catalysed reaction is cytidine(1402) in 16S rRNA + S-adenosyl-L-methionine = N(4)-methylcytidine(1402) in 16S rRNA + S-adenosyl-L-homocysteine + H(+). Functionally, specifically methylates the N4 position of cytidine in position 1402 (C1402) of 16S rRNA. This chain is Ribosomal RNA small subunit methyltransferase H, found in Chloroherpeton thalassium (strain ATCC 35110 / GB-78).